A 109-amino-acid polypeptide reads, in one-letter code: Putative pterin-4-alpha-carbinolamine dehydratase (109 aa).

This sequence belongs to the pterin-4-alpha-carbinolamine dehydratase family.

It carries out the reaction (4aS,6R)-4a-hydroxy-L-erythro-5,6,7,8-tetrahydrobiopterin = (6R)-L-erythro-6,7-dihydrobiopterin + H2O. The polypeptide is Putative pterin-4-alpha-carbinolamine dehydratase (Vibrio cholerae serotype O1 (strain ATCC 39315 / El Tor Inaba N16961)).